The following is a 486-amino-acid chain: Betaine aldehyde dehydrogenase (486 aa).

Residues threonine 23 and aspartate 90 each coordinate K(+). 147–149 is an NAD(+) binding site; the sequence is GAW. Lysine 159 (charge relay system) is an active-site residue. NAD(+)-binding positions include 173–176 and 226–229; these read KPSE and ESGT. Leucine 241 contributes to the K(+) binding site. Glutamate 247 (proton acceptor) is an active-site residue. Residues glycine 249, cysteine 281, and glutamate 382 each coordinate NAD(+). The Nucleophile role is filled by cysteine 281. Residue cysteine 281 is modified to Cysteine sulfenic acid (-SOH). The K(+) site is built by lysine 452 and glycine 455. Glutamate 459 acts as the Charge relay system in catalysis.

The protein belongs to the aldehyde dehydrogenase family. Dimer of dimers. The cofactor is K(+).

It carries out the reaction betaine aldehyde + NAD(+) + H2O = glycine betaine + NADH + 2 H(+). It participates in amine and polyamine biosynthesis; betaine biosynthesis via choline pathway; betaine from betaine aldehyde: step 1/1. In terms of biological role, involved in the biosynthesis of the osmoprotectant glycine betaine. Catalyzes the irreversible oxidation of betaine aldehyde to the corresponding acid. This is Betaine aldehyde dehydrogenase from Vibrio campbellii (strain ATCC BAA-1116).